The chain runs to 163 residues: uncharacterized protein (163 aa).

Residues 1–10 (MGVPRAREGR) show a composition bias toward basic and acidic residues. A disordered region spans residues 1 to 163 (MGVPRAREGR…WSFTPLRWGS (163 aa)).

This is an uncharacterized protein from Homo sapiens (Human).